The sequence spans 66 residues: MSQPLTVDCPTCGAPVEWSEKNAFRPFCSDRCKLIDLGAWAAEEHKIAGSEESEDELYSGDLEPRH.

Zn(2+)-binding residues include C9, C12, C28, and C32. Residues 45–66 (HKIAGSEESEDELYSGDLEPRH) form a disordered region.

This sequence belongs to the DNA gyrase inhibitor YacG family. As to quaternary structure, interacts with GyrB. It depends on Zn(2+) as a cofactor.

Functionally, inhibits all the catalytic activities of DNA gyrase by preventing its interaction with DNA. Acts by binding directly to the C-terminal domain of GyrB, which probably disrupts DNA binding by the gyrase. The polypeptide is DNA gyrase inhibitor YacG (Pseudomonas putida (strain ATCC 47054 / DSM 6125 / CFBP 8728 / NCIMB 11950 / KT2440)).